The chain runs to 388 residues: MEEFTLDRNSNVGNLIALAVLNKFDELARHGKPIIRANGVREWTTLAGVVIQKKMENEFICVCLATGVKCTPAGIIKNEQLGSVLHDCHAEILALRCFNRLLLEHCILIKESKKDTWLLEVADNGKFTLNSNLLIHLYVSECPCGDASMELLASRLENNKPWNLTVDSEKLMRGRADFGLLGIVRTKPGRPDAPVSWSKSCTDKLAAKQYLSILNSQTSLICEPIYLSCVVLYKKVIVKSAIDRAFGPFGRCAPLAEFGEKDNPYYFHPFTVLETDENFLYSRPLNQAEKTATSTNVLIWIGDKMQCTQVIHNGIKAGTKAKDVEKSQTLICRKSMMNLLHQLSQSLTNEKNYYEWKKLNIKRCQQKQILRNILKNWIPNGGNEFQWI.

Positions 63 to 388 (CLATGVKCTP…PNGGNEFQWI (326 aa)) constitute an A to I editase domain. Histidine 89 contacts Zn(2+). Glutamate 91 functions as the Proton donor in the catalytic mechanism. Arginine 96 is a 1D-myo-inositol hexakisphosphate binding site. Positions 144 and 201 each coordinate Zn(2+). Positions 204, 357, and 363 each coordinate 1D-myo-inositol hexakisphosphate.

Belongs to the ADAT1 family. 1D-myo-inositol hexakisphosphate is required as a cofactor. Zn(2+) serves as cofactor.

It is found in the cytoplasm. Its subcellular location is the nucleus. It catalyses the reaction adenosine(37) in tRNA(Ala) + H2O + H(+) = inosine(37) in tRNA(Ala) + NH4(+). In terms of biological role, deaminates adenosine-37 to inosine in tRNA-Ala. The chain is tRNA-specific adenosine deaminase 1 from Schizosaccharomyces pombe (strain 972 / ATCC 24843) (Fission yeast).